We begin with the raw amino-acid sequence, 122 residues long: Small ribosomal subunit protein uS13 (122 aa).

Positions 93-122 (RRGLPVRGQRTKTNARTRKGPKKTIAGKKK) are disordered.

It belongs to the universal ribosomal protein uS13 family. In terms of assembly, part of the 30S ribosomal subunit. Forms a loose heterodimer with protein S19. Forms two bridges to the 50S subunit in the 70S ribosome.

Located at the top of the head of the 30S subunit, it contacts several helices of the 16S rRNA. In the 70S ribosome it contacts the 23S rRNA (bridge B1a) and protein L5 of the 50S subunit (bridge B1b), connecting the 2 subunits; these bridges are implicated in subunit movement. Contacts the tRNAs in the A and P-sites. The sequence is that of Small ribosomal subunit protein uS13 from Corynebacterium kroppenstedtii (strain DSM 44385 / JCM 11950 / CIP 105744 / CCUG 35717).